We begin with the raw amino-acid sequence, 543 residues long: T-complex protein 1 subunit eta (543 aa).

Met-1 is modified (N-acetylmethionine). Gly-41 lines the ADP pocket. An ATP-binding site is contributed by Gly-41. At Lys-67 the chain carries N6-acetyllysine. Asp-92 serves as a coordination point for Mg(2+). ADP is bound by residues Gly-93, Thr-94, Thr-95, Ser-96, Ser-164, and Ser-165. Gly-93 serves as a coordination point for ATP. Residue Ser-96 participates in ATP binding. Lys-250 and Lys-320 each carry N6-acetyllysine. ATP-binding residues include Arg-398 and Gly-409. Gly-409 contacts ADP. Residue Lys-430 forms a Glycyl lysine isopeptide (Lys-Gly) (interchain with G-Cter in SUMO2) linkage. ADP-binding residues include Glu-494 and Arg-499. Residue Arg-499 coordinates ATP. The interval 524 to 543 is disordered; sequence RSTVDASPAAGRGRGRGRLH. Arg-535 carries the post-translational modification Omega-N-methylarginine.

It belongs to the TCP-1 chaperonin family. In terms of assembly, component of the chaperonin-containing T-complex (TRiC), a hexadecamer composed of two identical back-to-back stacked rings enclosing a protein folding chamber. Each ring is made up of eight different subunits: TCP1/CCT1, CCT2, CCT3, CCT4, CCT5, CCT6A/CCT6, CCT7, CCT8. Interacts with PACRG. Interacts with DLEC1.

It is found in the cytoplasm. The enzyme catalyses ATP + H2O = ADP + phosphate + H(+). Component of the chaperonin-containing T-complex (TRiC), a molecular chaperone complex that assists the folding of actin, tubulin and other proteins upon ATP hydrolysis. The TRiC complex mediates the folding of WRAP53/TCAB1, thereby regulating telomere maintenance. This Bos taurus (Bovine) protein is T-complex protein 1 subunit eta (CCT7).